The chain runs to 84 residues: Subtilisin-chymotrypsin inhibitor-2A (84 aa).

Residues 1–23 (MSSVEKKPEGVNTGAGDRHNLKT) are disordered.

It belongs to the protease inhibitor I13 (potato type I serine protease inhibitor) family.

Functionally, inhibits both subtilisin and chymotrypsin. The sequence is that of Subtilisin-chymotrypsin inhibitor-2A from Hordeum vulgare (Barley).